The primary structure comprises 102 residues: Protein AC4 (102 aa).

This sequence belongs to the geminiviridae protein AC4/C4 family.

Its function is as follows. Pathogenicity determinant. May act as a suppressor of RNA-mediated gene silencing, also known as post-transcriptional gene silencing (PTGS), a mechanism of plant viral defense that limits the accumulation of viral RNAs. The chain is Protein AC4 from Indian cassava mosaic virus (ICMV).